Reading from the N-terminus, the 49-residue chain is Large ribosomal subunit protein bL33B (49 aa).

It belongs to the bacterial ribosomal protein bL33 family.

The sequence is that of Large ribosomal subunit protein bL33B from Levilactobacillus brevis (strain ATCC 367 / BCRC 12310 / CIP 105137 / JCM 1170 / LMG 11437 / NCIMB 947 / NCTC 947) (Lactobacillus brevis).